We begin with the raw amino-acid sequence, 457 residues long: Methylenetetrahydrofolate--tRNA-(uracil-5-)-methyltransferase TrmFO (457 aa).

12–17 (GGGLAG) serves as a coordination point for FAD.

The protein belongs to the MnmG family. TrmFO subfamily. FAD is required as a cofactor.

It is found in the cytoplasm. It catalyses the reaction uridine(54) in tRNA + (6R)-5,10-methylene-5,6,7,8-tetrahydrofolate + NADH + H(+) = 5-methyluridine(54) in tRNA + (6S)-5,6,7,8-tetrahydrofolate + NAD(+). The catalysed reaction is uridine(54) in tRNA + (6R)-5,10-methylene-5,6,7,8-tetrahydrofolate + NADPH + H(+) = 5-methyluridine(54) in tRNA + (6S)-5,6,7,8-tetrahydrofolate + NADP(+). Functionally, catalyzes the folate-dependent formation of 5-methyl-uridine at position 54 (M-5-U54) in all tRNAs. The polypeptide is Methylenetetrahydrofolate--tRNA-(uracil-5-)-methyltransferase TrmFO (Myxococcus xanthus (strain DK1622)).